The chain runs to 495 residues: 4-aminobutyrate aminotransferase (495 aa).

160–161 is a binding site for pyridoxal 5'-phosphate; it reads GS. Arginine 216 provides a ligand contact to substrate. Lysine 350 carries the post-translational modification N6-(pyridoxal phosphate)lysine. Pyridoxal 5'-phosphate is bound at residue threonine 374.

The protein belongs to the class-III pyridoxal-phosphate-dependent aminotransferase family. Homodimer. Requires pyridoxal 5'-phosphate as cofactor.

The enzyme catalyses 4-aminobutanoate + 2-oxoglutarate = succinate semialdehyde + L-glutamate. This is 4-aminobutyrate aminotransferase (gabT) from Dictyostelium discoideum (Social amoeba).